Reading from the N-terminus, the 437-residue chain is GTPase Obg (437 aa).

Positions 2–160 (SMFLDTAKIS…RQLELELKIL (159 aa)) constitute an Obg domain. The OBG-type G domain maps to 161–338 (ADVGLVGFPS…LLEATAELLA (178 aa)). GTP is bound by residues 167-174 (GFPSVGKS), 192-196 (FTTIV), 214-217 (DLPG), 284-287 (NKMD), and 319-321 (SSL). The Mg(2+) site is built by Ser-174 and Thr-194. The OCT domain maps to 359-437 (GFAETEKDFE…IGKFEFEFVD (79 aa)).

This sequence belongs to the TRAFAC class OBG-HflX-like GTPase superfamily. OBG GTPase family. As to quaternary structure, monomer. Requires Mg(2+) as cofactor.

The protein localises to the cytoplasm. In terms of biological role, an essential GTPase which binds GTP, GDP and possibly (p)ppGpp with moderate affinity, with high nucleotide exchange rates and a fairly low GTP hydrolysis rate. Plays a role in control of the cell cycle, stress response, ribosome biogenesis and in those bacteria that undergo differentiation, in morphogenesis control. This chain is GTPase Obg, found in Streptococcus pyogenes serotype M5 (strain Manfredo).